We begin with the raw amino-acid sequence, 859 residues long: Heterogeneous nuclear ribonucleoprotein U-like protein 1 (859 aa).

The segment at 1 to 103 (MDVRRLKVNE…GPDGHYVMDN (103 aa)) is necessary for interaction with HRMT1L1. Positions 3–37 (VRRLKVNELREELQRRGLDTRGLKAELAERLLAAL) constitute an SAP domain. A disordered region spans residues 36–131 (ALEAEEPEDE…SSYDRRPLDM (96 aa)). The span at 38-54 (EAEEPEDERELEADDDP) shows a compositional bias: acidic residues. A compositionally biased stretch (pro residues) spans 77-88 (QPPPPGLQPHPE). A Glycyl lysine isopeptide (Lys-Gly) (interchain with G-Cter in SUMO1); alternate cross-link involves residue lysine 117. Lysine 117 is covalently cross-linked (Glycyl lysine isopeptide (Lys-Gly) (interchain with G-Cter in SUMO2); alternate). The span at 118–130 (QENESSYDRRPLD) shows a compositional bias: basic and acidic residues. A Glycyl lysine isopeptide (Lys-Gly) (interchain with G-Cter in SUMO1); alternate cross-link involves residue lysine 143. Lysine 143 is covalently cross-linked (Glycyl lysine isopeptide (Lys-Gly) (interchain with G-Cter in SUMO2); alternate). The interval 146–206 (MKQEAPPSFL…QPPAEEDEDD (61 aa)) is disordered. Glycyl lysine isopeptide (Lys-Gly) (interchain with G-Cter in SUMO2) cross-links involve residues lysine 147 and lysine 163. The span at 174 to 193 (RPFEENRGRGYFEHREDRRG) shows a compositional bias: basic and acidic residues. The B30.2/SPRY domain occupies 192–389 (RGRSPQPPAE…VEFNFGQRAE (198 aa)). Residue serine 195 is modified to Phosphoserine. Residue threonine 210 is modified to Phosphothreonine. The tract at residues 214–859 (IDTYNCDLHF…GSTQGGTSTQ (646 aa)) is necessary for interaction with TP53. Glycyl lysine isopeptide (Lys-Gly) (interchain with G-Cter in SUMO2) cross-links involve residues lysine 271 and lysine 450. The tract at residues 457–595 (NAIMDKMRVM…EEADKLVRQY (139 aa)) is necessary for interaction with BRD7 and transcriptional activation. Position 513 is a phosphoserine (serine 513). Lysine 540 participates in a covalent cross-link: Glycyl lysine isopeptide (Lys-Gly) (interchain with G-Cter in SUMO2). The segment covering 595–612 (YNEEGRKAGPPPEKRFDS) has biased composition (basic and acidic residues). A disordered region spans residues 595–814 (YNEEGRKAGP…PPTAQTYPQP (220 aa)). Tandem repeats lie at residues 613–615 (RGG), 620–622 (RGG), 639–641 (RGG), 645–647 (RGG), and 659–661 (RGG). Gly residues-rich tracts occupy residues 613–626 (RGGG…GGGF) and 634–670 (PPGG…GGGY). The segment at 613 to 661 (RGGGFRGRGGGGGFQRYDNRGPPGGNRGGFQNRGGGGGSGGGGGNYRGG) is 5 X 3 AA repeats of R-G-G. Residues 613–661 (RGGGFRGRGGGGGFQRYDNRGPPGGNRGGFQNRGGGGGSGGGGGNYRGG) are necessary for transcription repression. Arginine 639 carries the asymmetric dimethylarginine modification. 2 positions are modified to asymmetric dimethylarginine; alternate: arginine 645 and arginine 659. Arginine 645 and arginine 659 each carry omega-N-methylarginine; alternate. Residues arginine 664 and arginine 674 each carry the omega-N-methylarginine modification. The span at 671-696 (NQNRWGNNNRDNNNSNNRGNYNRAPQ) shows a compositional bias: low complexity. A compositionally biased stretch (pro residues) spans 697-720 (QQPPPQQPPPPQPPPQQPPPPPSY). Serine 721 carries the phosphoserine modification. Positions 728–744 (GASSYNKNSNIPGSSAN) are enriched in polar residues. Positions 745-775 (TSTPTVSSYTPPQPSYSQPPYNQGGYTQGYT) are enriched in low complexity. 2 stretches are compositionally biased toward pro residues: residues 776–786 (APPPPPPPPPA) and 796–807 (NPAPYTPPPPPT).

As to quaternary structure, interacts with BRD7, PRMT2, TP53 and NXF1. Associates with histones and BRD7. Methylated.

It localises to the nucleus. In terms of biological role, acts as a basic transcriptional regulator. Represses basic transcription driven by several virus and cellular promoters. When associated with BRD7, activates transcription of glucocorticoid-responsive promoter in the absence of ligand-stimulation. Also plays a role in mRNA processing and transport. Binds avidly to poly(G) and poly(C) RNA homopolymers in vitro. The protein is Heterogeneous nuclear ribonucleoprotein U-like protein 1 (Hnrnpul1) of Mus musculus (Mouse).